A 47-amino-acid polypeptide reads, in one-letter code: MKKFRWVVLGIVVVVCLLLWAQVFNIMCDQDVQFFSGICAINKFIPW.

The chain crosses the membrane as a helical span at residues 6-26 (WVVLGIVVVVCLLLWAQVFNI).

Belongs to the MgrB family. As to quaternary structure, may form homooligomers. Probably interacts with the periplasmic domain of PhoQ.

The protein localises to the cell inner membrane. In terms of biological role, phoP-regulated transcription is redox-sensitive, being activated when the periplasm becomes more reducing. MgrB acts between DsbA/DsbB and PhoP/PhoQ in this pathway. Represses PhoP/PhoQ signaling, possibly by binding to the periplasmic domain of PhoQ, altering its activity and that of downstream effector PhoP. The protein is PhoP/PhoQ regulator MgrB of Salmonella agona (strain SL483).